The following is an 877-amino-acid chain: SRP-independent targeting protein 1 (877 aa).

Phosphoserine is present on residues Ser309, Ser310, Ser311, Ser332, and Ser334. Disordered stretches follow at residues 369–414 (LRKQ…PSND), 446–521 (DDYT…DVLS), and 550–579 (KPFN…SNHF). A compositionally biased stretch (low complexity) spans 389-402 (RSQSYSSSNMSRSP). Positions 412-441 (SNDELVYDELNNQINEVQDRAKNEEIVLYN) form a coiled coil. Residues 447–462 (DYTKERGEQEQDRTSY) show a composition bias toward basic and acidic residues. The segment covering 470-501 (YDDEEGGNEDNYDDDEDDDDDDDDDDESDDEG) has biased composition (acidic residues). Polar residues-rich tracts occupy residues 510-521 (LSRSGSSTDVLS) and 551-579 (PFNQ…SNHF). Glycyl lysine isopeptide (Lys-Gly) (interchain with G-Cter in ubiquitin) cross-links involve residues Lys668 and Lys670. 3 positions are modified to phosphoserine: Ser692, Ser694, and Ser706. Residues 773-815 (SLPKEREDDNDSTNSTIVPNHPDNDNYNDNDNDNNTGINSNNF) are disordered. The span at 805-815 (DNNTGINSNNF) shows a compositional bias: low complexity. Position 841 is a phosphoserine (Ser841).

As to quaternary structure, interacts with ENV10/SND2.

Its subcellular location is the cytoplasm. Its function is as follows. Functions in the SND pathway, a SRP (signal recognition particle) and GET (guided entry of tail-anchored proteins) independent pathway for targeting a broad range of substrate proteins to the endoplasmic reticulum. SND functions in parallel to GET in targeting proteins with downstream hydrophobic motifs. The protein is SRP-independent targeting protein 1 of Saccharomyces cerevisiae (strain ATCC 204508 / S288c) (Baker's yeast).